Consider the following 436-residue polypeptide: GTPase Der (436 aa).

EngA-type G domains are found at residues 4-165 (NVIA…NFDS) and 172-347 (FKLS…ENLE). Residues 10 to 17 (GKPNVGKS), 57 to 61 (DTGGI), 119 to 122 (NKLD), 178 to 185 (GQPNSGKS), 225 to 229 (DTAGI), and 290 to 293 (NKWD) contribute to the GTP site. The 85-residue stretch at 348 to 432 (REIKPSVLTN…PINIIFKNKS (85 aa)) folds into the KH-like domain.

This sequence belongs to the TRAFAC class TrmE-Era-EngA-EngB-Septin-like GTPase superfamily. EngA (Der) GTPase family. In terms of assembly, associates with the 50S ribosomal subunit.

Functionally, GTPase that plays an essential role in the late steps of ribosome biogenesis. The polypeptide is GTPase Der (Mycoplasmopsis agalactiae (strain NCTC 10123 / CIP 59.7 / PG2) (Mycoplasma agalactiae)).